Here is a 115-residue protein sequence, read N- to C-terminus: U3-lycotoxin-Ls1k (115 aa).

The N-terminal stretch at 1–20 is a signal peptide; sequence MKFVLLFGVLLVTLFSYSSA. Positions 21-44 are excised as a propeptide; that stretch reads EMFDDFDQADEDELLSLIEKEEAR. Disulfide bonds link Cys-48/Cys-63, Cys-55/Cys-72, Cys-62/Cys-87, and Cys-74/Cys-85.

It belongs to the neurotoxin 19 (CSTX) family. 01 subfamily. Expressed by the venom gland.

It is found in the secreted. The polypeptide is U3-lycotoxin-Ls1k (Lycosa singoriensis (Wolf spider)).